Consider the following 334-residue polypeptide: Beta-glucanase (334 aa).

The first 27 residues, 1–27, serve as a signal peptide directing secretion; that stretch reads MKNRVISLLMASLLLVLSVIVAPFYKA. The region spanning 28–248 is the GH16 domain; the sequence is EAATVVNTPF…YVKYYPNGVP (221 aa). Glutamate 136 (nucleophile) is an active-site residue. Residue glutamate 140 is the Proton donor of the active site. Residues 246–265 are disordered; sequence GVPQDNPTPTPTIAPSTPTN. In terms of domain architecture, Dockerin spans 267 to 334; it reads NLPLKGDVNG…RYLIRAIPSL (68 aa).

The protein belongs to the glycosyl hydrolase 16 family.

It carries out the reaction Hydrolysis of (1-&gt;4)-beta-D-glucosidic linkages in beta-D-glucans containing (1-&gt;3)- and (1-&gt;4)-bonds.. The protein is Beta-glucanase (licB) of Acetivibrio thermocellus (Hungateiclostridium thermocellum).